A 411-amino-acid chain; its full sequence is LL-diaminopimelate aminotransferase (411 aa).

Tyrosine 15 and glycine 42 together coordinate substrate. Pyridoxal 5'-phosphate is bound by residues tyrosine 72, 108–109, tyrosine 132, asparagine 188, tyrosine 219, and 247–249; these read AK and SFS. The substrate site is built by lysine 109, tyrosine 132, and asparagine 188. At lysine 250 the chain carries N6-(pyridoxal phosphate)lysine. Residues arginine 258 and asparagine 293 each coordinate pyridoxal 5'-phosphate. Substrate contacts are provided by asparagine 293 and arginine 389.

The protein belongs to the class-I pyridoxal-phosphate-dependent aminotransferase family. LL-diaminopimelate aminotransferase subfamily. Homodimer. Pyridoxal 5'-phosphate serves as cofactor.

It catalyses the reaction (2S,6S)-2,6-diaminopimelate + 2-oxoglutarate = (S)-2,3,4,5-tetrahydrodipicolinate + L-glutamate + H2O + H(+). It functions in the pathway amino-acid biosynthesis; L-lysine biosynthesis via DAP pathway; LL-2,6-diaminopimelate from (S)-tetrahydrodipicolinate (aminotransferase route): step 1/1. Functionally, involved in the synthesis of meso-diaminopimelate (m-DAP or DL-DAP), required for both lysine and peptidoglycan biosynthesis. Catalyzes the direct conversion of tetrahydrodipicolinate to LL-diaminopimelate. Is also able to catalyze the reverse reaction in vitro, i.e. the transamination of LL-diaminopimelate with 2-oxoglutarate to produce tetrahydrodipicolinate and glutamate. Can also use m-DAP instead of LL-DAP as the amino-group donor, and oxaloacetate or pyruvate as the amino-group acceptor. The chain is LL-diaminopimelate aminotransferase from Desulfitobacterium hafniense (strain DSM 10664 / DCB-2).